The sequence spans 275 residues: Large ribosomal subunit protein uL2cz/uL2cy (275 aa).

Disordered stretches follow at residues 1–26 (MAIH…VKSN) and 224–275 (MNPV…RRTK). Residues 7-26 (KTSTPSTRNGTVDSRQVKSN) show a composition bias toward polar residues.

Belongs to the universal ribosomal protein uL2 family. As to quaternary structure, part of the 50S ribosomal subunit.

It localises to the plastid. Its subcellular location is the chloroplast. The polypeptide is Large ribosomal subunit protein uL2cz/uL2cy (rpl2-A) (Phaseolus angularis (Azuki bean)).